Consider the following 278-residue polypeptide: NAD-capped RNA hydrolase NudC (278 aa).

A substrate-binding site is contributed by Arg-84. Positions 114 and 117 each coordinate Zn(2+). Residue Glu-127 coordinates substrate. Cys-132 lines the Zn(2+) pocket. Residue Tyr-140 coordinates substrate. Residues 141 to 264 enclose the Nudix hydrolase domain; the sequence is PRISPSMIVL…SIARYLIEAY (124 aa). 3 residues coordinate a divalent metal cation: Ala-174, Glu-190, and Glu-194. The short motif at 175 to 196 is the Nudix box element; the sequence is GFVEPGESAEDCVHREVMEEVQ. 208 to 215 provides a ligand contact to substrate; the sequence is QCWPFPHS. A divalent metal cation is bound at residue Glu-235. Position 257 (Ala-257) interacts with substrate.

This sequence belongs to the Nudix hydrolase family. NudC subfamily. Homodimer. It depends on Mg(2+) as a cofactor. Mn(2+) serves as cofactor. Requires Zn(2+) as cofactor.

The enzyme catalyses a 5'-end NAD(+)-phospho-ribonucleoside in mRNA + H2O = a 5'-end phospho-adenosine-phospho-ribonucleoside in mRNA + beta-nicotinamide D-ribonucleotide + 2 H(+). The catalysed reaction is NAD(+) + H2O = beta-nicotinamide D-ribonucleotide + AMP + 2 H(+). It carries out the reaction NADH + H2O = reduced beta-nicotinamide D-ribonucleotide + AMP + 2 H(+). In terms of biological role, mRNA decapping enzyme that specifically removes the nicotinamide adenine dinucleotide (NAD) cap from a subset of mRNAs by hydrolyzing the diphosphate linkage to produce nicotinamide mononucleotide (NMN) and 5' monophosphate mRNA. The NAD-cap is present at the 5'-end of some mRNAs and stabilizes RNA against 5'-processing. Has preference for mRNAs with a 5'-end purine. Catalyzes the hydrolysis of a broad range of dinucleotide pyrophosphates. The chain is NAD-capped RNA hydrolase NudC from Pseudomonas syringae pv. syringae (strain B728a).